Here is a 231-residue protein sequence, read N- to C-terminus: Elongation factor 1-delta 2 (231 aa).

Alanine 2 is modified (N-acetylalanine). The GST C-terminal domain maps to 11–73 (SGLKKLDEHL…LRISGVSAEG (63 aa)). Residues 82–136 (SPITEEAVATPPAADSKDTAAEEEDDDDVDLFGEETEEEKKAAEERAASVKASTK) are disordered. A compositionally biased stretch (acidic residues) spans 102–118 (AEEEDDDDVDLFGEETE). Positions 119–129 (EEKKAAEERAA) are enriched in basic and acidic residues.

The protein belongs to the EF-1-beta/EF-1-delta family. In terms of assembly, EF-1 is composed of 4 subunits: alpha, beta (1B-alpha=beta'), delta (1B-beta), and gamma (1B-gamma).

EF-1-beta and EF-1-delta stimulate the exchange of GDP bound to EF-1-alpha to GTP. In Arabidopsis thaliana (Mouse-ear cress), this protein is Elongation factor 1-delta 2.